The chain runs to 396 residues: Tryptophan synthase beta chain (396 aa).

Lys86 carries the post-translational modification N6-(pyridoxal phosphate)lysine.

The protein belongs to the TrpB family. Tetramer of two alpha and two beta chains. The cofactor is pyridoxal 5'-phosphate.

It carries out the reaction (1S,2R)-1-C-(indol-3-yl)glycerol 3-phosphate + L-serine = D-glyceraldehyde 3-phosphate + L-tryptophan + H2O. Its pathway is amino-acid biosynthesis; L-tryptophan biosynthesis; L-tryptophan from chorismate: step 5/5. The beta subunit is responsible for the synthesis of L-tryptophan from indole and L-serine. This Aliivibrio fischeri (strain ATCC 700601 / ES114) (Vibrio fischeri) protein is Tryptophan synthase beta chain.